Here is a 288-residue protein sequence, read N- to C-terminus: Protease HtpX (288 aa).

2 helical membrane passes run 4 to 24 and 33 to 53; these read ILLF…ILTL and VGLL…SLLM. Histidine 139 lines the Zn(2+) pocket. Glutamate 140 is an active-site residue. Histidine 143 contacts Zn(2+). The next 2 membrane-spanning stretches (helical) occupy residues 146–166 and 186–206; these read SGDM…VIFI and IYFM…SMIA. Glutamate 214 is a binding site for Zn(2+).

Belongs to the peptidase M48B family. Zn(2+) serves as cofactor.

The protein localises to the cell inner membrane. This is Protease HtpX from Histophilus somni (strain 2336) (Haemophilus somnus).